We begin with the raw amino-acid sequence, 559 residues long: Putative helicase 22 (559 aa).

The region spanning 186–347 is the Helicase ATP-binding domain; it reads VSDVNVIGNG…EIMGLLGKIS (162 aa). Residue 199 to 206 participates in ATP binding; that stretch reads APTGSGKS. The DEAH box motif lies at 300–303; that stretch reads DEAH. The Helicase C-terminal domain occupies 410–552; sequence TNKQIISKIK…KMNFIENEYN (143 aa).

The protein is Putative helicase 22 (SIFV0022) of Sulfolobus islandicus filamentous virus (isolate Iceland/Hveragerdi) (SIFV).